Here is a 347-residue protein sequence, read N- to C-terminus: Protein RecA (347 aa).

Residue 64–71 (GPESSGKT) participates in ATP binding. The interval 328–347 (DKVDEDKTEEEASQESLDLK) is disordered.

It belongs to the RecA family.

It is found in the cytoplasm. Can catalyze the hydrolysis of ATP in the presence of single-stranded DNA, the ATP-dependent uptake of single-stranded DNA by duplex DNA, and the ATP-dependent hybridization of homologous single-stranded DNAs. It interacts with LexA causing its activation and leading to its autocatalytic cleavage. The sequence is that of Protein RecA from Oceanobacillus iheyensis (strain DSM 14371 / CIP 107618 / JCM 11309 / KCTC 3954 / HTE831).